The chain runs to 434 residues: UDP-N-acetylmuramoyl-L-alanyl-D-glutamate--2,6-diaminopimelate ligase (434 aa).

S17 is a UDP-N-acetyl-alpha-D-muramoyl-L-alanyl-D-glutamate binding site. 68–74 (GTNGKTT) is an ATP binding site. UDP-N-acetyl-alpha-D-muramoyl-L-alanyl-D-glutamate contacts are provided by residues 111–112 (TT), S138, Q144, and R146. K178 is modified (N6-carboxylysine). Meso-2,6-diaminopimelate-binding positions include R326, 350–353 (DNPR), G401, and E405. A Meso-diaminopimelate recognition motif motif is present at residues 350–353 (DNPR).

This sequence belongs to the MurCDEF family. MurE subfamily. Mg(2+) serves as cofactor. Carboxylation is probably crucial for Mg(2+) binding and, consequently, for the gamma-phosphate positioning of ATP.

The protein resides in the cytoplasm. The enzyme catalyses UDP-N-acetyl-alpha-D-muramoyl-L-alanyl-D-glutamate + meso-2,6-diaminopimelate + ATP = UDP-N-acetyl-alpha-D-muramoyl-L-alanyl-gamma-D-glutamyl-meso-2,6-diaminopimelate + ADP + phosphate + H(+). The protein operates within cell wall biogenesis; peptidoglycan biosynthesis. Catalyzes the addition of meso-diaminopimelic acid to the nucleotide precursor UDP-N-acetylmuramoyl-L-alanyl-D-glutamate (UMAG) in the biosynthesis of bacterial cell-wall peptidoglycan. In Wolinella succinogenes (strain ATCC 29543 / DSM 1740 / CCUG 13145 / JCM 31913 / LMG 7466 / NCTC 11488 / FDC 602W) (Vibrio succinogenes), this protein is UDP-N-acetylmuramoyl-L-alanyl-D-glutamate--2,6-diaminopimelate ligase.